We begin with the raw amino-acid sequence, 451 residues long: tRNA-2-methylthio-N(6)-dimethylallyladenosine synthase (451 aa).

The MTTase N-terminal domain occupies 11 to 127; that stretch reads RHYHITTFGC…LEDLLQQVFD (117 aa). 6 residues coordinate [4Fe-4S] cluster: C20, C56, C90, C162, C166, and C169. The region spanning 148-385 is the Radical SAM core domain; it reads RDSTITAWVN…NHLVAQKAAE (238 aa). Residues 388 to 451 form the TRAM domain; sequence QRYLGRIEEV…RAFSLTGEIV (64 aa).

The protein belongs to the methylthiotransferase family. MiaB subfamily. Monomer. It depends on [4Fe-4S] cluster as a cofactor.

It is found in the cytoplasm. It catalyses the reaction N(6)-dimethylallyladenosine(37) in tRNA + (sulfur carrier)-SH + AH2 + 2 S-adenosyl-L-methionine = 2-methylsulfanyl-N(6)-dimethylallyladenosine(37) in tRNA + (sulfur carrier)-H + 5'-deoxyadenosine + L-methionine + A + S-adenosyl-L-homocysteine + 2 H(+). In terms of biological role, catalyzes the methylthiolation of N6-(dimethylallyl)adenosine (i(6)A), leading to the formation of 2-methylthio-N6-(dimethylallyl)adenosine (ms(2)i(6)A) at position 37 in tRNAs that read codons beginning with uridine. The sequence is that of tRNA-2-methylthio-N(6)-dimethylallyladenosine synthase from Rippkaea orientalis (strain PCC 8801 / RF-1) (Cyanothece sp. (strain PCC 8801)).